Here is a 244-residue protein sequence, read N- to C-terminus: 5-oxoprolinase subunit A (244 aa).

It belongs to the LamB/PxpA family. As to quaternary structure, forms a complex composed of PxpA, PxpB and PxpC.

The catalysed reaction is 5-oxo-L-proline + ATP + 2 H2O = L-glutamate + ADP + phosphate + H(+). Functionally, catalyzes the cleavage of 5-oxoproline to form L-glutamate coupled to the hydrolysis of ATP to ADP and inorganic phosphate. The protein is 5-oxoprolinase subunit A of Escherichia coli O7:K1 (strain IAI39 / ExPEC).